A 305-amino-acid chain; its full sequence is Ribonuclease BN (305 aa).

Residues His64, His66, Asp68, His69, His141, Asp212, and His270 each contribute to the Zn(2+) site. Asp68 functions as the Proton acceptor in the catalytic mechanism.

Belongs to the RNase Z family. RNase BN subfamily. In terms of assembly, homodimer. The cofactor is Zn(2+).

Zinc phosphodiesterase, which has both exoribonuclease and endoribonuclease activities. This Escherichia coli O157:H7 protein is Ribonuclease BN.